We begin with the raw amino-acid sequence, 598 residues long: Probable translation initiation factor IF-2 (598 aa).

The region spanning 3–225 is the tr-type G domain; that stretch reads LRCPIVSVLG…GLAQRFLEQK (223 aa). The interval 12–19 is G1; the sequence is GHVDHGKT. 12-19 contributes to the GTP binding site; it reads GHVDHGKT. The tract at residues 37–41 is G2; it reads GITQH. The segment at 76–79 is G3; the sequence is DTPG. Residues 76–80 and 130–133 each bind GTP; these read DTPGH and NKVD. The tract at residues 130–133 is G4; sequence NKVD. Positions 200 to 202 are G5; the sequence is SAM.

It belongs to the TRAFAC class translation factor GTPase superfamily. Classic translation factor GTPase family. IF-2 subfamily.

Its function is as follows. Function in general translation initiation by promoting the binding of the formylmethionine-tRNA to ribosomes. Seems to function along with eIF-2. In Methanococcus maripaludis (strain DSM 14266 / JCM 13030 / NBRC 101832 / S2 / LL), this protein is Probable translation initiation factor IF-2.